Here is a 24-residue protein sequence, read N- to C-terminus: Coenzyme PQQ synthesis protein A (24 aa).

Residues 16-20 constitute a cross-link (pyrroloquinoline quinone (Glu-Tyr)); sequence EVTMY.

The protein belongs to the PqqA family.

It functions in the pathway cofactor biosynthesis; pyrroloquinoline quinone biosynthesis. Its function is as follows. Required for coenzyme pyrroloquinoline quinone (PQQ) biosynthesis. PQQ is probably formed by cross-linking a specific glutamate to a specific tyrosine residue and excising these residues from the peptide. This is Coenzyme PQQ synthesis protein A from Acinetobacter baumannii (strain SDF).